We begin with the raw amino-acid sequence, 304 residues long: Nicotinamide/nicotinic acid mononucleotide adenylyltransferase 2 (304 aa).

2 residues coordinate NAD(+): Ser-16 and Phe-17. His-24 is a binding site for ATP. The NAD(+) site is built by Trp-92 and Thr-95. S-palmitoyl cysteine attachment occurs at residues Cys-161 and Cys-162. NAD(+) contacts are provided by Gly-197, Asp-199, Leu-209, Trp-210, and Arg-229. 268-271 provides a ligand contact to ATP; the sequence is TKSR.

The protein belongs to the eukaryotic NMN adenylyltransferase family. Monomer. The cofactor is Mg(2+).

The protein localises to the golgi apparatus membrane. The protein resides in the cytoplasmic vesicle membrane. Its subcellular location is the cytoplasm. It localises to the cell projection. It is found in the axon. The enzyme catalyses beta-nicotinamide D-ribonucleotide + ATP + H(+) = diphosphate + NAD(+). It carries out the reaction nicotinate beta-D-ribonucleotide + ATP + H(+) = deamido-NAD(+) + diphosphate. It participates in cofactor biosynthesis; NAD(+) biosynthesis; NAD(+) from nicotinamide D-ribonucleotide: step 1/1. Its pathway is cofactor biosynthesis; NAD(+) biosynthesis; deamido-NAD(+) from nicotinate D-ribonucleotide: step 1/1. Its function is as follows. Nicotinamide/nicotinate-nucleotide adenylyltransferase that acts as an axon maintenance factor. Axon survival factor required for the maintenance of healthy axons: acts by delaying Wallerian axon degeneration, an evolutionarily conserved process that drives the loss of damaged axons. Catalyzes the formation of NAD(+) from nicotinamide mononucleotide (NMN) and ATP. Can also use the deamidated form; nicotinic acid mononucleotide (NaMN) as substrate but with a lower efficiency. Also catalyzes the reverse reaction, i.e. the pyrophosphorolytic cleavage of NAD(+). For the pyrophosphorolytic activity prefers NAD(+), NADH and NaAD as substrates and degrades nicotinic acid adenine dinucleotide phosphate (NHD) less effectively. Also acts as an activator of ADP-ribosylation by supporting the catalytic activity of PARP16 and promoting mono-ADP-ribosylation of ribosomes by PARP16. May be involved in the maintenance of axonal integrity. This Danio rerio (Zebrafish) protein is Nicotinamide/nicotinic acid mononucleotide adenylyltransferase 2 (nmnat2).